Consider the following 260-residue polypeptide: Imidazole glycerol phosphate synthase subunit HisF (260 aa).

Catalysis depends on residues D11 and D130.

It belongs to the HisA/HisF family. Heterodimer of HisH and HisF.

Its subcellular location is the cytoplasm. It catalyses the reaction 5-[(5-phospho-1-deoxy-D-ribulos-1-ylimino)methylamino]-1-(5-phospho-beta-D-ribosyl)imidazole-4-carboxamide + L-glutamine = D-erythro-1-(imidazol-4-yl)glycerol 3-phosphate + 5-amino-1-(5-phospho-beta-D-ribosyl)imidazole-4-carboxamide + L-glutamate + H(+). The protein operates within amino-acid biosynthesis; L-histidine biosynthesis; L-histidine from 5-phospho-alpha-D-ribose 1-diphosphate: step 5/9. In terms of biological role, IGPS catalyzes the conversion of PRFAR and glutamine to IGP, AICAR and glutamate. The HisF subunit catalyzes the cyclization activity that produces IGP and AICAR from PRFAR using the ammonia provided by the HisH subunit. This chain is Imidazole glycerol phosphate synthase subunit HisF, found in Caulobacter sp. (strain K31).